A 392-amino-acid polypeptide reads, in one-letter code: ATP phosphoribosyltransferase regulatory subunit (392 aa).

Belongs to the class-II aminoacyl-tRNA synthetase family. HisZ subfamily. Heteromultimer composed of HisG and HisZ subunits.

Its subcellular location is the cytoplasm. It participates in amino-acid biosynthesis; L-histidine biosynthesis; L-histidine from 5-phospho-alpha-D-ribose 1-diphosphate: step 1/9. In terms of biological role, required for the first step of histidine biosynthesis. May allow the feedback regulation of ATP phosphoribosyltransferase activity by histidine. This is ATP phosphoribosyltransferase regulatory subunit from Gloeobacter violaceus (strain ATCC 29082 / PCC 7421).